Reading from the N-terminus, the 485-residue chain is MTITLQQLIALSPLLIVGLTVVVVMLCIAWRRNHFVNATMTVIGLNIALLSLYFVGQAGPTDVTPLLRVDGLSMFYTGLVLLASLATSTFAYPWLQGYPDNRDEFYLLVLIAALGGILLSSANHLASLFIGIELLSLPLFGLVGYAFRQKRSLEASIKYMLLSAAASSFLLFGMALIYAESGDMSFASLGKSLSDHQIHEPLLLAGLGMMIVGLGFKLSLVPFQLWTPDVYQGAPAPVSTFLATAGKIAVFGAVMRLFLYAPMADSESVRIVLGVIAFASILFGNVMAVSQTNIKRLLGYSSIAHLGYLLVALIAVQSHQLALETVGVYLVGYLFSSLGAFGVVSLMSSPYRGPDADSLFSYRGLFWHKPILSAVMTVMMLSLAGIPMTLGFFGKFYVLAVGVNAELWWLTGAVVLGSAIGLYYYLRVMVSLYLTAPQQLQRDTPNNWALTAGGVVVLISSIAVLFFGLYPQPLISLVQLAQPML.

Transmembrane regions (helical) follow at residues 8-28 (LIAL…MLCI), 35-55 (FVNA…LYFV), 75-95 (FYTG…YPWL), 105-125 (FYLL…ANHL), 127-147 (SLFI…GYAF), 159-179 (YMLL…LIYA), 203-223 (LLAG…LVPF), 235-255 (PAPV…GAVM), 271-291 (IVLG…AVSQ), 297-317 (LLGY…IAVQ), 326-346 (VGVY…VVSL), 374-394 (AVMT…GFFG), 407-426 (LWWL…YYYL), and 449-469 (ALTA…FFGL).

This sequence belongs to the complex I subunit 2 family. As to quaternary structure, NDH-1 is composed of 13 different subunits. Subunits NuoA, H, J, K, L, M, N constitute the membrane sector of the complex.

The protein resides in the cell inner membrane. It catalyses the reaction a quinone + NADH + 5 H(+)(in) = a quinol + NAD(+) + 4 H(+)(out). NDH-1 shuttles electrons from NADH, via FMN and iron-sulfur (Fe-S) centers, to quinones in the respiratory chain. The immediate electron acceptor for the enzyme in this species is believed to be ubiquinone. Couples the redox reaction to proton translocation (for every two electrons transferred, four hydrogen ions are translocated across the cytoplasmic membrane), and thus conserves the redox energy in a proton gradient. The sequence is that of NADH-quinone oxidoreductase subunit N from Pectobacterium carotovorum subsp. carotovorum (strain PC1).